We begin with the raw amino-acid sequence, 431 residues long: 3-phosphoshikimate 1-carboxyvinyltransferase (431 aa).

Residues lysine 22, serine 23, and arginine 27 each coordinate 3-phosphoshikimate. Lysine 22 serves as a coordination point for phosphoenolpyruvate. Phosphoenolpyruvate is bound by residues glycine 94 and arginine 122. 3-phosphoshikimate contacts are provided by serine 167, glutamine 169, aspartate 315, and lysine 342. Glutamine 169 lines the phosphoenolpyruvate pocket. Catalysis depends on aspartate 315, which acts as the Proton acceptor. Phosphoenolpyruvate is bound by residues arginine 346 and arginine 388.

It belongs to the EPSP synthase family. As to quaternary structure, monomer.

It localises to the cytoplasm. The catalysed reaction is 3-phosphoshikimate + phosphoenolpyruvate = 5-O-(1-carboxyvinyl)-3-phosphoshikimate + phosphate. Its pathway is metabolic intermediate biosynthesis; chorismate biosynthesis; chorismate from D-erythrose 4-phosphate and phosphoenolpyruvate: step 6/7. Functionally, catalyzes the transfer of the enolpyruvyl moiety of phosphoenolpyruvate (PEP) to the 5-hydroxyl of shikimate-3-phosphate (S3P) to produce enolpyruvyl shikimate-3-phosphate and inorganic phosphate. This is 3-phosphoshikimate 1-carboxyvinyltransferase from Pelobacter propionicus (strain DSM 2379 / NBRC 103807 / OttBd1).